Reading from the N-terminus, the 130-residue chain is MARVKRAVNAHKKRRVILERAAGYRGQRSRLYRKAKEQVTHSLVYAYRDRRAKKGEFRRLWIQRINAAARANGLTYNRLIQGLSLAGVQVDRRILAELAVHEPATFASLVQTAKAALPANTSAPKVAANA.

Belongs to the bacterial ribosomal protein bL20 family.

In terms of biological role, binds directly to 23S ribosomal RNA and is necessary for the in vitro assembly process of the 50S ribosomal subunit. It is not involved in the protein synthesizing functions of that subunit. The sequence is that of Large ribosomal subunit protein bL20 from Clavibacter michiganensis subsp. michiganensis (strain NCPPB 382).